Consider the following 571-residue polypeptide: Penton protein (571 aa).

Residues 298–324 (DDTEQGGDGAGGGNNSGSGAEENSNAA) form a disordered region. Positions 303–313 (GGDGAGGGNNS) are enriched in gly residues. Residues 314-324 (GSGAEENSNAA) show a composition bias toward low complexity. The Cell attachment site motif lies at 340–342 (RGD). Positions 347-383 (RAEEKRAEAEAAAEAAAPAAQPEVEKPQKKPVIKPLT) are disordered. Residues 356–368 (EAAAEAAAPAAQP) show a composition bias toward low complexity. S455 carries the phosphoserine; by host modification.

The protein belongs to the adenoviridae penton family. In terms of assembly, interacts with the fiber protein (via N-terminal tail region). Interacts with the capsid vertex protein; this interaction binds the penton base to neighboring peripentonal hexons. Interacts (via the cell attachment site RGD) with host heterodimer ITGAV-ITGB5; this interaction promotes virus internalization. Interacts with host WWP1 and WWP2.

Its subcellular location is the virion. It localises to the host nucleus. Its function is as follows. Major capsid protein that self-associates to form penton base pentamers, each in the shape of a pentagon, situated at the 12 vertices of the pseudo T=25 capsid. Involved in virus secondary attachment to host cell after initial attachment by the fiber protein. Binds host integrin heterodimer ITGAV-ITGB5 (alphaV-beta5) thereby triggering clathrin-mediated endocytosis of virions. Mediates initial virus attachment to CXADR-negative cells. Binding to integrins ITGAV-ITGB5 also seems to induce macropinocytosis uptake of the virus. As the virus enters the host cell, penton proteins are shed concomitant with virion acidification in the endosome. This chain is Penton protein, found in Homo sapiens (Human).